Here is a 156-residue protein sequence, read N- to C-terminus: 2-C-methyl-D-erythritol 2,4-cyclodiphosphate synthase (156 aa).

Residues Asp-8 and His-10 each coordinate a divalent metal cation. 4-CDP-2-C-methyl-D-erythritol 2-phosphate contacts are provided by residues 8–10 (DVH) and 34–35 (HS). His-42 is an a divalent metal cation binding site. Residues 56–58 (DIG), 61–65 (FPDTD), 100–106 (AQRPKMA), 132–135 (TTEE), and Phe-139 each bind 4-CDP-2-C-methyl-D-erythritol 2-phosphate.

Belongs to the IspF family. As to quaternary structure, homotrimer. It depends on a divalent metal cation as a cofactor.

The catalysed reaction is 4-CDP-2-C-methyl-D-erythritol 2-phosphate = 2-C-methyl-D-erythritol 2,4-cyclic diphosphate + CMP. It participates in isoprenoid biosynthesis; isopentenyl diphosphate biosynthesis via DXP pathway; isopentenyl diphosphate from 1-deoxy-D-xylulose 5-phosphate: step 4/6. Its function is as follows. Involved in the biosynthesis of isopentenyl diphosphate (IPP) and dimethylallyl diphosphate (DMAPP), two major building blocks of isoprenoid compounds. Catalyzes the conversion of 4-diphosphocytidyl-2-C-methyl-D-erythritol 2-phosphate (CDP-ME2P) to 2-C-methyl-D-erythritol 2,4-cyclodiphosphate (ME-CPP) with a corresponding release of cytidine 5-monophosphate (CMP). The protein is 2-C-methyl-D-erythritol 2,4-cyclodiphosphate synthase of Clostridium perfringens (strain ATCC 13124 / DSM 756 / JCM 1290 / NCIMB 6125 / NCTC 8237 / Type A).